The chain runs to 1507 residues: Histone-lysine N-methyltransferase set-2 (1507 aa).

Positions 1–32 are disordered; it reads MSTHDMNHHPPRKSHSKRDKPSSSNSGPKIEN. A compositionally biased stretch (basic residues) spans 9-18; it reads HPPRKSHSKR. An RRM domain is found at 128 to 199; that stretch reads VSLFNMDDNC…QNLLATKCTP (72 aa). Disordered regions lie at residues 280–578, 650–697, 803–826, 842–1058, and 1163–1199; these read DYTM…QPQM, EPFS…EEPA, DEEK…SNHL, SSRG…GPII, and QKPR…FKPR. Residues 296–315 show a composition bias toward pro residues; that stretch reads PIPPPPIKEESPPPPPPPPV. Over residues 316–327 the composition is skewed to low complexity; sequence ASVSNLAPVPSV. A compositionally biased stretch (polar residues) spans 331 to 342; that stretch reads YYNNIQPSSSTM. Positions 413 to 444 are enriched in basic and acidic residues; sequence VKYETYKMEKRKIKYEGGNKKYEQVHIKERTA. Over residues 456-465 the composition is skewed to low complexity; the sequence is SSESASGSSS. Basic residues predominate over residues 478 to 488; sequence KKKKRPKSPNR. Residues 566–575 are compositionally biased toward polar residues; it reads HLQTPYQHVQ. Basic and acidic residues-rich tracts occupy residues 668-680 and 803-823; these read DVGR…KPSL and DEEK…EKPS. Basic residues predominate over residues 846 to 868; it reads FYRKQKPIPKSHPKHQEHHHHAK. Low complexity predominate over residues 869-908; sequence ASVSTPVHSSSTSRNSSVAPTPQRTVSTSSSSSSAATSAR. Residues 941–951 are compositionally biased toward polar residues; the sequence is SFSSTSIQSSP. The segment covering 958–971 has biased composition (low complexity); it reads SSSSRTSSSSSTSS. Residues 973–982 show a composition bias toward basic and acidic residues; sequence KQEETADEKS. The segment covering 990 to 1007 has biased composition (low complexity); it reads SSDESSTTGSTATSVVSS. Over residues 1015 to 1047 the composition is skewed to basic and acidic residues; it reads QQEKTDGEPPKKKSQTDFISERVSKIEGEERPL. Residues 1179–1190 are compositionally biased toward pro residues; that stretch reads EPPPTKRPAPPP. The RxxxRR motif motif lies at 1340-1345; that stretch reads RLLQRR. The region spanning 1368-1485 is the SET domain; the sequence is KMIKFARSRI…KGEEITYDYK (118 aa). Residue Y1484 participates in S-adenosyl-L-methionine binding. Residues 1491–1507 enclose the Post-SET domain; that stretch reads DKIDCLCGAKTCRGYLN.

Belongs to the class V-like SAM-binding methyltransferase superfamily. Component of the Set1C/COMPASS complex (also known as the SET2 complex), which contains at least set-2, swd-2.1, cfp-1, rbbp-5, wdr-5.1, dpy-30 and ash-2. Expressed in all cells of embryo. In L1 larva, it is predominantly expressed in Z2 and Z3 primordial germ cells. In adults, it is predominantly expressed in the germline.

It localises to the nucleus. It carries out the reaction L-lysyl(4)-[histone H3] + 3 S-adenosyl-L-methionine = N(6),N(6),N(6)-trimethyl-L-lysyl(4)-[histone H3] + 3 S-adenosyl-L-homocysteine + 3 H(+). The enzyme catalyses N(6)-methyl-L-lysyl(4)-[histone H3] + S-adenosyl-L-methionine = N(6),N(6)-dimethyl-L-lysyl(4)-[histone H3] + S-adenosyl-L-homocysteine + H(+). The catalysed reaction is N(6),N(6)-dimethyl-L-lysyl(4)-[histone H3] + S-adenosyl-L-methionine = N(6),N(6),N(6)-trimethyl-L-lysyl(4)-[histone H3] + S-adenosyl-L-homocysteine + H(+). Functionally, catalytic component of the COMPASS (Set1C) complex that specifically mono-, di- and trimethylates histone H3 to form H3K4me1/2/3. Binds RNAs which might negatively affect its histone methyltransferase activity. COMPASS recognizes ubiquitinated H2B on one face of the nucleosome which stimulates the methylation of H3 on the opposing face. H3 'Lys-4' methylation represents a specific tag for epigenetic transcriptional activation. Implicated in the epigenetic inheritance of lifespan over several generations. Acts in the germline to limit the longevity of the soma, probably by regulating a lipid metabolism pathway that signals from the germline to the intestine, thereby preventing accumulation of mono-unsaturated fatty acids. Methylation in the germline is required for germline development and fertility, possibly by ensuring genome stability. May act redundantly with mes-3 and mes-4 proteins in the development of a fertile germline. Required for RNAi. Functions as an antagonist of hpl-1 and hpl-2 activity in growth and somatic gonad development. Cooperates with jmjd-3.1 and egl-27 to ensure robust transdifferentiation of the Y rectal cell to the PDA motor neuron during larval development. In Caenorhabditis elegans, this protein is Histone-lysine N-methyltransferase set-2 (set-2).